Here is a 352-residue protein sequence, read N- to C-terminus: SKP1-like protein 20 (352 aa).

The interval 108 to 167 (TSAADSLQLKPLVDLTSRALARIIEGKNPEEIREIFHLPDDLTEEEKLEPLKNSMDDPRI) is interaction with the F-box domain of F-box proteins. Disordered stretches follow at residues 214–251 (KAVK…RSKQ) and 267–288 (LLSA…DIDD). The span at 216 to 230 (VKMSKGKKKKKKKKD) shows a compositional bias: basic residues. The span at 239–249 (IHDKESHDLRS) shows a compositional bias: basic and acidic residues.

It belongs to the SKP1 family. In terms of assembly, part of a SCF (SKP1-cullin-F-box) protein ligase complex. In terms of tissue distribution, expressed in young seedlings, roots, leaves, floral stems, inflorescences, and siliques.

It is found in the nucleus. Its pathway is protein modification; protein ubiquitination. Involved in ubiquitination and subsequent proteasomal degradation of target proteins. Together with CUL1, RBX1 and a F-box protein, it forms a SCF E3 ubiquitin ligase complex. The functional specificity of this complex depends on the type of F-box protein. In the SCF complex, it serves as an adapter that links the F-box protein to CUL1. The protein is SKP1-like protein 20 (ASK20) of Arabidopsis thaliana (Mouse-ear cress).